The sequence spans 138 residues: Large ribosomal subunit protein uL14 (138 aa).

Belongs to the universal ribosomal protein uL14 family. In terms of assembly, part of the 50S ribosomal subunit. Forms a cluster with proteins L3 and L24e, part of which may contact the 16S rRNA in 2 intersubunit bridges.

In terms of biological role, binds to 23S rRNA. Forms part of two intersubunit bridges in the 70S ribosome. The chain is Large ribosomal subunit protein uL14 from Sulfurisphaera tokodaii (strain DSM 16993 / JCM 10545 / NBRC 100140 / 7) (Sulfolobus tokodaii).